Reading from the N-terminus, the 452-residue chain is Exodeoxyribonuclease 7 large subunit (452 aa).

This sequence belongs to the XseA family. Heterooligomer composed of large and small subunits.

It localises to the cytoplasm. The catalysed reaction is Exonucleolytic cleavage in either 5'- to 3'- or 3'- to 5'-direction to yield nucleoside 5'-phosphates.. Functionally, bidirectionally degrades single-stranded DNA into large acid-insoluble oligonucleotides, which are then degraded further into small acid-soluble oligonucleotides. The polypeptide is Exodeoxyribonuclease 7 large subunit (Lysinibacillus sphaericus (strain C3-41)).